The following is a 334-amino-acid chain: Hematopoietic SH2 domain-containing protein (334 aa).

The 92-residue stretch at 34-125 (WFHGTISREA…PFGELLTQAC (92 aa)) folds into the SH2 domain. Disordered stretches follow at residues 157–181 (EVQR…KGEF) and 254–280 (EDSC…ATFR). The segment covering 258–267 (AATTSLQNPA) has biased composition (polar residues).

As to quaternary structure, interacts with FES and TNK2. Post-translationally, may be phosphorylated by FES and ACK1. As to expression, predominantly expressed in spleen and thymus. Appears not to be expressed in heart, brain, liver, kidney, embryo, lung and ovary.

Its subcellular location is the cytoplasm. The protein resides in the mitochondrion. Functionally, adapter protein involved in tyrosine kinase and CD28 signaling. May be a modulator of the apoptotic response through its ability to affect mitochondrial stability. This is Hematopoietic SH2 domain-containing protein (Hsh2d) from Mus musculus (Mouse).